Reading from the N-terminus, the 833-residue chain is Protein translocase subunit SecA (833 aa).

ATP is bound by residues glutamine 87, 105-109 (GEGKT), and aspartate 494. The segment at 789–816 (PAAVAYSGGEAEAGPAQPHREDPKVGRN) is disordered. The span at 806-815 (PHREDPKVGR) shows a compositional bias: basic and acidic residues. 4 residues coordinate Zn(2+): cysteine 819, cysteine 821, cysteine 830, and cysteine 831.

It belongs to the SecA family. Monomer and homodimer. Part of the essential Sec protein translocation apparatus which comprises SecA, SecYEG and auxiliary proteins SecDF-YajC and YidC. The cofactor is Zn(2+).

The protein resides in the cell inner membrane. The protein localises to the cytoplasm. It carries out the reaction ATP + H2O + cellular proteinSide 1 = ADP + phosphate + cellular proteinSide 2.. Functionally, part of the Sec protein translocase complex. Interacts with the SecYEG preprotein conducting channel. Has a central role in coupling the hydrolysis of ATP to the transfer of proteins into and across the cell membrane, serving as an ATP-driven molecular motor driving the stepwise translocation of polypeptide chains across the membrane. In Nitratidesulfovibrio vulgaris (strain DP4) (Desulfovibrio vulgaris), this protein is Protein translocase subunit SecA.